We begin with the raw amino-acid sequence, 51 residues long: Perinerin (51 aa).

Functionally, antibacterial activity against both Gram-negative and Gram-positive bacteria. Shows marked activity against P.aeruginosa, B.megaterium, A.viridans, moderate activity against E.coli K-12, S.aureus and M.luteus, and minor activity against P.vulgaris. Antifungal activity against P.heliothis. This is Perinerin from Perinereis aibuhitensis (Korean lugworm).